Reading from the N-terminus, the 727-residue chain is Two-component response regulator-like APRR7 (727 aa).

The interval 1–47 (MNANEEGEGSRYPITDRKTGETKFDRVESRTEKHSEEEKTNGITMDV) is disordered. The span at 14-40 (ITDRKTGETKFDRVESRTEKHSEEEKT) shows a compositional bias: basic and acidic residues. Residues 79-197 (RVLLVENDDC…ELKILWQHVW (119 aa)) form the Response regulatory domain. Disordered regions lie at residues 203-265 (SSGS…KKAV), 291-312 (NPEF…QEHD), 339-416 (KDEP…KTLD), 464-487 (SRYN…SLQD), 509-560 (ESLP…QPLP), and 606-670 (VNGS…SQRE). The span at 246-259 (ASDGSSDGSGAQSS) shows a compositional bias: low complexity. 3 stretches are compositionally biased toward polar residues: residues 344-353 (SKTTGIMRQD), 467-487 (NPAS…SLQD), and 519-535 (VGSN…NNAF). The segment covering 538-555 (PGAPKVSSAGSSSVKHSS) has biased composition (low complexity). Gly residues predominate over residues 641-657 (GKNGNGDGSGSGSGSGS). The region spanning 669 to 711 (REAALTKFRQKRKERCFRKKVRYQSRKKLAEQRPRVRGQFVRK) is the CCT domain.

This sequence belongs to the ARR-like family. Phosphorylated. Phosphorylation varies throughout the diurnal cycle.

Its subcellular location is the nucleus. In terms of biological role, transcriptional repressor of CCA1 and LHY, and positive regulator of LWD1 and LWD2 expression. Represses the expression of other clock proteins and master regulators of plant growth, development and response to abiotic stress. Involved in the positive and negative feedback loops of the circadian clock. Controls photoperiodic flowering response and temperature compensation. Expression of several members of the ARR-like family is controlled by circadian rhythm. APRR9, APRR7, and APRR5 coordinately act on the upstream region of the target genes to repress their expression from noon until midnight. The particular coordinated sequential expression of APRR9, APRR7, APRR5, APRR3 and APPR1 result to circadian waves that may be at the basis of the endogenous circadian clock. The protein is Two-component response regulator-like APRR7 (APRR7) of Arabidopsis thaliana (Mouse-ear cress).